Consider the following 415-residue polypeptide: Gamma-glutamyl phosphate reductase (415 aa).

The protein belongs to the gamma-glutamyl phosphate reductase family.

It localises to the cytoplasm. It carries out the reaction L-glutamate 5-semialdehyde + phosphate + NADP(+) = L-glutamyl 5-phosphate + NADPH + H(+). Its pathway is amino-acid biosynthesis; L-proline biosynthesis; L-glutamate 5-semialdehyde from L-glutamate: step 2/2. Catalyzes the NADPH-dependent reduction of L-glutamate 5-phosphate into L-glutamate 5-semialdehyde and phosphate. The product spontaneously undergoes cyclization to form 1-pyrroline-5-carboxylate. The sequence is that of Gamma-glutamyl phosphate reductase from Dictyoglomus turgidum (strain DSM 6724 / Z-1310).